A 500-amino-acid chain; its full sequence is Cytochrome P450 71B9 (500 aa).

The helical transmembrane segment at 1–21 (MATIWFLSLLFLCCILLAAFK) threads the bilayer. Position 440 (Cys-440) interacts with heme.

Belongs to the cytochrome P450 family. Heme serves as cofactor.

The protein localises to the membrane. This Arabidopsis thaliana (Mouse-ear cress) protein is Cytochrome P450 71B9 (CYP71B9).